The following is a 27-amino-acid chain: M-lycotoxin-Hc2a (27 aa).

Expressed by the venom gland.

It localises to the secreted. In terms of biological role, forms pore that permeabilize the cell membrane. Promotes efflux of calcium from synaptosomes, causes hemolysis, and dissipates voltage gradients across muscle membrane. Potently inhibits the growth of bacteria, yeast and Leishmania. May function both in the prey capture strategy as well as protection from infectious organisms arising from prey ingestion. The polypeptide is M-lycotoxin-Hc2a (Hogna carolinensis (Carolina wolf spider)).